The chain runs to 646 residues: MRPLVCVLWMFLFALLSSHTESVAVMSVDLGSEWVKVAIVKPGVPMEIVLNKESRRKTPAAIALKENERLFGENALGMAVKNPKVTFRYFQDLLGKRLDNPQVQAFEARFPEYHLVKDERRETVLFKLSEDLTYSPEELLGMVLNYSRSLAEDFAEQPVKDVVITVPAFFNQAERRAVLQAAQLSGLKVLQLINDNTAVALNYGVFRRKDINATAQNVMFYDMGTRSTICTIVTYQTIKTKDSGTQPQLQIRGVGFDRTLGGLEIDLRLRDHLAKLFNEQKKSKKDVRENQRAMNKLLKEANRVKTILSANNDHMAQIEGLMDDIDFKAKVTRQELEDLCADLFNRVSAPVQQALASAEMKMEEIDQVILVGGATRVPKVQEFLLKVVGKEELSKNINADEAAAMGAVYQAAALSKAFKVKPFIVRDAAIFPIQVEFTREVEEENHSKSLKHNKRILFQRLAPYPQRKVITFNRYTDDFAFSINYGDLSYLGPEDLKVFGSLNLTTVKLNGVGESFQKRSDYESKGIKAHFNMDESGLLTLDRVEAVFETVADEKPELESTLTKLGNTISSLFGGGSSVSETKENVTDSVQEEDEVPTEPTKEEEQESADPADKQQDKENNKEKGTSATNEKEEGKKEEEKAEPQE.

A signal peptide spans 1–22; it reads MRPLVCVLWMFLFALLSSHTES. A disordered region spans residues 572–646; it reads LFGGGSSVSE…KEEEKAEPQE (75 aa). The segment covering 590 to 610 has biased composition (acidic residues); the sequence is VQEEDEVPTEPTKEEEQESAD. The segment covering 611–646 has biased composition (basic and acidic residues); that stretch reads PADKQQDKENNKEKGTSATNEKEEGKKEEEKAEPQE.

Belongs to the heat shock protein 70 family.

The protein localises to the endoplasmic reticulum lumen. Functionally, has a pivotal role in cytoprotective cellular mechanisms triggered by oxygen deprivation. May play a role as a molecular chaperone and participate in protein folding. The protein is Hypoxia up-regulated protein 1 (hyou1) of Xenopus laevis (African clawed frog).